Here is a 180-residue protein sequence, read N- to C-terminus: Translation initiation factor IF-3 (180 aa).

The protein belongs to the IF-3 family. Monomer.

Its subcellular location is the cytoplasm. Its function is as follows. IF-3 binds to the 30S ribosomal subunit and shifts the equilibrium between 70S ribosomes and their 50S and 30S subunits in favor of the free subunits, thus enhancing the availability of 30S subunits on which protein synthesis initiation begins. This chain is Translation initiation factor IF-3, found in Shewanella baltica (strain OS223).